Reading from the N-terminus, the 242-residue chain is Methylthioribulose-1-phosphate dehydratase (242 aa).

The tract at residues 1–22 is disordered; that stretch reads MAAASGHGLELANGGDATQDKL. Cysteine 97 provides a ligand contact to substrate. The Zn(2+) site is built by histidine 115 and histidine 117. The active-site Proton donor/acceptor is the glutamate 139. Histidine 195 lines the Zn(2+) pocket.

This sequence belongs to the aldolase class II family. MtnB subfamily. Requires Zn(2+) as cofactor.

It is found in the cytoplasm. The catalysed reaction is 5-(methylsulfanyl)-D-ribulose 1-phosphate = 5-methylsulfanyl-2,3-dioxopentyl phosphate + H2O. The protein operates within amino-acid biosynthesis; L-methionine biosynthesis via salvage pathway; L-methionine from S-methyl-5-thio-alpha-D-ribose 1-phosphate: step 2/6. Catalyzes the dehydration of methylthioribulose-1-phosphate (MTRu-1-P) into 2,3-diketo-5-methylthiopentyl-1-phosphate (DK-MTP-1-P). Functions in the methionine salvage pathway. May play a role in apoptosis. This Gallus gallus (Chicken) protein is Methylthioribulose-1-phosphate dehydratase.